A 211-amino-acid polypeptide reads, in one-letter code: Adenylate kinase (211 aa).

13 to 18 (GAGKGT) serves as a coordination point for ATP. The segment at 33 to 62 (STGDILRVAVANKTKLGLEAKKFMDAGQLV) is NMP. Residues threonine 34, arginine 39, 60–62 (QLV), 88–91 (GFPR), and glutamine 95 contribute to the AMP site. An LID region spans residues 129–161 (GRRTSKVTGKIYHIKFNPPVDEKPEDLVQRADD). ATP contacts are provided by residues arginine 130 and 139–140 (IY). AMP-binding residues include arginine 158 and arginine 169. Residue lysine 197 coordinates ATP.

The protein belongs to the adenylate kinase family. Monomer.

The protein localises to the cytoplasm. The catalysed reaction is AMP + ATP = 2 ADP. It participates in purine metabolism; AMP biosynthesis via salvage pathway; AMP from ADP: step 1/1. Catalyzes the reversible transfer of the terminal phosphate group between ATP and AMP. Plays an important role in cellular energy homeostasis and in adenine nucleotide metabolism. The polypeptide is Adenylate kinase (Fusobacterium nucleatum subsp. nucleatum (strain ATCC 25586 / DSM 15643 / BCRC 10681 / CIP 101130 / JCM 8532 / KCTC 2640 / LMG 13131 / VPI 4355)).